Consider the following 199-residue polypeptide: Holliday junction branch migration complex subunit RuvA (199 aa).

The interval 1–63 (MIGCLIGEVF…EDAQQLYGFS (63 aa)) is domain I. Residues 64 to 142 (DAQEKTIFRT…TLAQGTSSAA (79 aa)) are domain II. The tract at residues 143–150 (ALPQIQFV) is flexible linker. Residues 150-199 (VSNSPVAEAEAALQSLGYKPLEAQKAVAAVKADYTESADIIRAALKSMMK) are domain III.

This sequence belongs to the RuvA family. Homotetramer. Forms an RuvA(8)-RuvB(12)-Holliday junction (HJ) complex. HJ DNA is sandwiched between 2 RuvA tetramers; dsDNA enters through RuvA and exits via RuvB. An RuvB hexamer assembles on each DNA strand where it exits the tetramer. Each RuvB hexamer is contacted by two RuvA subunits (via domain III) on 2 adjacent RuvB subunits; this complex drives branch migration. In the full resolvosome a probable DNA-RuvA(4)-RuvB(12)-RuvC(2) complex forms which resolves the HJ.

Its subcellular location is the cytoplasm. The RuvA-RuvB-RuvC complex processes Holliday junction (HJ) DNA during genetic recombination and DNA repair, while the RuvA-RuvB complex plays an important role in the rescue of blocked DNA replication forks via replication fork reversal (RFR). RuvA specifically binds to HJ cruciform DNA, conferring on it an open structure. The RuvB hexamer acts as an ATP-dependent pump, pulling dsDNA into and through the RuvAB complex. HJ branch migration allows RuvC to scan DNA until it finds its consensus sequence, where it cleaves and resolves the cruciform DNA. The protein is Holliday junction branch migration complex subunit RuvA of Acinetobacter baumannii (strain ACICU).